Reading from the N-terminus, the 94-residue chain is Small ribosomal subunit protein uS19 (94 aa).

This sequence belongs to the universal ribosomal protein uS19 family.

Its function is as follows. Protein S19 forms a complex with S13 that binds strongly to the 16S ribosomal RNA. The polypeptide is Small ribosomal subunit protein uS19 (Buchnera aphidicola subsp. Cinara cedri (strain Cc)).